A 582-amino-acid polypeptide reads, in one-letter code: Aspartate--tRNA ligase (582 aa).

E174 is a binding site for L-aspartate. Positions 198 to 201 (QITK) are aspartate. R220 lines the L-aspartate pocket. ATP is bound by residues 220 to 222 (RDE) and Q229. H443 is a binding site for L-aspartate. E477 contacts ATP. R484 is an L-aspartate binding site. 529–532 (GLDR) lines the ATP pocket.

It belongs to the class-II aminoacyl-tRNA synthetase family. Type 1 subfamily. Homodimer.

Its subcellular location is the cytoplasm. The catalysed reaction is tRNA(Asp) + L-aspartate + ATP = L-aspartyl-tRNA(Asp) + AMP + diphosphate. Catalyzes the attachment of L-aspartate to tRNA(Asp) in a two-step reaction: L-aspartate is first activated by ATP to form Asp-AMP and then transferred to the acceptor end of tRNA(Asp). This Streptococcus pyogenes serotype M1 protein is Aspartate--tRNA ligase.